The sequence spans 488 residues: Inosine-5'-monophosphate dehydrogenase (488 aa).

CBS domains lie at 93 to 149 and 153 to 214; these read VVTD…NQPV and MTPK…CKDE. Residues aspartate 248 and 248-250 contribute to the NAD(+) site; that span reads DSS. At lysine 267 the chain carries N6-acetyllysine. 298–300 provides a ligand contact to NAD(+); the sequence is GIG. The K(+) site is built by glycine 300 and glycine 302. Serine 303 serves as a coordination point for IMP. A K(+)-binding site is contributed by cysteine 305. Cysteine 305 serves as the catalytic Thioimidate intermediate. IMP is bound by residues 338–340, 361–362, and 385–389; these read DGG, GS, and YRGMG. Residue arginine 401 is the Proton acceptor of the active site. Glutamate 415 lines the IMP pocket. Lysine 428 carries the N6-acetyllysine modification. K(+) contacts are provided by glutamate 469, serine 470, and histidine 471.

This sequence belongs to the IMPDH/GMPR family. In terms of assembly, homotetramer. Requires K(+) as cofactor.

The enzyme catalyses IMP + NAD(+) + H2O = XMP + NADH + H(+). It participates in purine metabolism; XMP biosynthesis via de novo pathway; XMP from IMP: step 1/1. With respect to regulation, mycophenolic acid (MPA) is a non-competitive inhibitor that prevents formation of the closed enzyme conformation by binding to the same site as the amobile flap. In contrast, mizoribine monophosphate (MZP) is a competitive inhibitor that induces the closed conformation. MPA is a potent inhibitor of mammalian IMPDHs but a poor inhibitor of the bacterial enzymes. MZP is a more potent inhibitor of bacterial IMPDH. Its function is as follows. Catalyzes the conversion of inosine 5'-phosphate (IMP) to xanthosine 5'-phosphate (XMP), the first committed and rate-limiting step in the de novo synthesis of guanine nucleotides, and therefore plays an important role in the regulation of cell growth. The polypeptide is Inosine-5'-monophosphate dehydrogenase (Escherichia coli O157:H7).